The sequence spans 313 residues: Ribosomal RNA small subunit methyltransferase H (313 aa).

S-adenosyl-L-methionine is bound by residues 35–37 (GGH), aspartate 55, phenylalanine 79, aspartate 100, and glutamine 107.

This sequence belongs to the methyltransferase superfamily. RsmH family.

The protein localises to the cytoplasm. It catalyses the reaction cytidine(1402) in 16S rRNA + S-adenosyl-L-methionine = N(4)-methylcytidine(1402) in 16S rRNA + S-adenosyl-L-homocysteine + H(+). Specifically methylates the N4 position of cytidine in position 1402 (C1402) of 16S rRNA. The protein is Ribosomal RNA small subunit methyltransferase H of Burkholderia thailandensis (strain ATCC 700388 / DSM 13276 / CCUG 48851 / CIP 106301 / E264).